The chain runs to 105 residues: Small ribosomal subunit protein uS10 (105 aa).

The protein belongs to the universal ribosomal protein uS10 family. Part of the 30S ribosomal subunit.

In terms of biological role, involved in the binding of tRNA to the ribosomes. The polypeptide is Small ribosomal subunit protein uS10 (Gloeothece citriformis (strain PCC 7424) (Cyanothece sp. (strain PCC 7424))).